The primary structure comprises 344 residues: 4-dimethylallyltryptophan N-methyltransferase easF (344 aa).

This sequence belongs to the methyltransferase superfamily. As to quaternary structure, homodimer.

It catalyses the reaction 4-(3-methylbut-2-enyl)-L-tryptophan + S-adenosyl-L-methionine = 4-(3-methylbut-2-enyl)-L-abrine + S-adenosyl-L-homocysteine + H(+). It participates in alkaloid biosynthesis; ergot alkaloid biosynthesis. 4-dimethylallyltryptophan N-methyltransferase; part of the gene cluster that mediates the biosynthesis of fungal ergot alkaloid. DmaW catalyzes the first step of ergot alkaloid biosynthesis by condensing dimethylallyl diphosphate (DMAP) and tryptophan to form 4-dimethylallyl-L-tryptophan. The second step is catalyzed by the methyltransferase easF that methylates 4-dimethylallyl-L-tryptophan in the presence of S-adenosyl-L-methionine, resulting in the formation of 4-dimethylallyl-L-abrine. The catalase easC and the FAD-dependent oxidoreductase easE then transform 4-dimethylallyl-L-abrine to chanoclavine-I which is further oxidized by easD in the presence of NAD(+), resulting in the formation of chanoclavine-I aldehyde. Agroclavine dehydrogenase easG then mediates the conversion of chanoclavine-I aldehyde to agroclavine via a non-enzymatic adduct reaction: the substrate is an iminium intermediate that is formed spontaneously from chanoclavine-I aldehyde in the presence of glutathione. The presence of easA is not required to complete this reaction. Further conversion of agroclavine to paspalic acid is a two-step process involving oxidation of agroclavine to elymoclavine and of elymoclavine to paspalic acid, the second step being performed by the elymoclavine oxidase cloA. Paspalic acid is then further converted to D-lysergic acid. Ergopeptines are assembled from D-lysergic acid and three different amino acids by the D-lysergyl-peptide-synthetases composed each of a monomudular and a trimodular nonribosomal peptide synthetase subunit. LpsB and lpsC encode the monomodular subunits responsible for D-lysergic acid activation and incorporation into the ergopeptine backbone. LpsA1 and A2 subunits encode the trimodular nonribosomal peptide synthetase assembling the tripeptide portion of ergopeptines. LpsA1 is responsible for formation of the major ergopeptine, ergotamine, and lpsA2 for alpha-ergocryptine, the minor ergopeptine of the total alkaloid mixture elaborated by C.purpurea. D-lysergyl-tripeptides are assembled by the nonribosomal peptide synthetases and released as N-(D-lysergyl-aminoacyl)-lactams. Cyclolization of the D-lysergyl-tripeptides is performed by the Fe(2+)/2-ketoglutarate-dependent dioxygenase easH which introduces a hydroxyl group into N-(D-lysergyl-aminoacyl)-lactam at alpha-C of the aminoacyl residue followed by spontaneous condensation with the terminal lactam carbonyl group. The protein is 4-dimethylallyltryptophan N-methyltransferase easF of Claviceps purpurea (strain 20.1) (Ergot fungus).